Reading from the N-terminus, the 125-residue chain is Ly6/PLAUR domain-containing protein 2 (125 aa).

The first 22 residues, 1–22, serve as a signal peptide directing secretion; it reads MRGTRLALLALVLAACGELAPA. The UPAR/Ly6 domain maps to 25–100; it reads CYVCPEPTGV…VSCCNTELCN (76 aa). Asparagine 46 carries N-linked (GlcNAc...) asparagine glycosylation. Glycine 103 carries the GPI-anchor amidated glycine lipid modification. The propeptide at 104 to 125 is removed in mature form; the sequence is APALNSLHCGALTLLPLLSLRL.

It localises to the cell membrane. The sequence is that of Ly6/PLAUR domain-containing protein 2 (LYPD2) from Homo sapiens (Human).